We begin with the raw amino-acid sequence, 883 residues long: Alanine--tRNA ligase (883 aa).

Residues His-570, His-574, Cys-672, and His-676 each contribute to the Zn(2+) site.

Belongs to the class-II aminoacyl-tRNA synthetase family. Zn(2+) is required as a cofactor.

Its subcellular location is the cytoplasm. The enzyme catalyses tRNA(Ala) + L-alanine + ATP = L-alanyl-tRNA(Ala) + AMP + diphosphate. Its function is as follows. Catalyzes the attachment of alanine to tRNA(Ala) in a two-step reaction: alanine is first activated by ATP to form Ala-AMP and then transferred to the acceptor end of tRNA(Ala). Also edits incorrectly charged Ser-tRNA(Ala) and Gly-tRNA(Ala) via its editing domain. The sequence is that of Alanine--tRNA ligase from Heliobacterium modesticaldum (strain ATCC 51547 / Ice1).